The following is a 700-amino-acid chain: Elongation factor G 1 (700 aa).

The tr-type G domain maps to 8–290 (ERYRNIGISA…AVIEYLPSPI (283 aa)). GTP contacts are provided by residues 17 to 24 (AHIDAGKT), 88 to 92 (DTPGH), and 142 to 145 (NKMD).

This sequence belongs to the TRAFAC class translation factor GTPase superfamily. Classic translation factor GTPase family. EF-G/EF-2 subfamily.

It is found in the cytoplasm. Its function is as follows. Catalyzes the GTP-dependent ribosomal translocation step during translation elongation. During this step, the ribosome changes from the pre-translocational (PRE) to the post-translocational (POST) state as the newly formed A-site-bound peptidyl-tRNA and P-site-bound deacylated tRNA move to the P and E sites, respectively. Catalyzes the coordinated movement of the two tRNA molecules, the mRNA and conformational changes in the ribosome. In Bordetella avium (strain 197N), this protein is Elongation factor G 1.